The chain runs to 383 residues: DNA dC-&gt;dU-editing enzyme APOBEC-3G (383 aa).

Residues methionine 1 to serine 60 are essential for cytoplasmic localization. CMP/dCMP-type deaminase domains lie at arginine 29–leucine 138 and glycine 214–leucine 327. Phosphothreonine; by PKA is present on threonine 32. Histidine 65, cysteine 97, and cysteine 100 together coordinate Zn(2+). A necessary for homooligomerization region spans residues lysine 209–alanine 335. The interaction with DNA stretch occupies residues serine 213–glutamine 215. At threonine 218 the chain carries Phosphothreonine; by PKA and CAMK2. Histidine 257 contacts Zn(2+). Glutamate 259 acts as the Proton donor in catalysis. Residues cysteine 287 and cysteine 290 each coordinate Zn(2+). An interaction with DNA region spans residues arginine 312–arginine 319.

Belongs to the cytidine and deoxycytidylate deaminase family. As to quaternary structure, homodimer. Zn(2+) is required as a cofactor.

It is found in the cytoplasm. The protein localises to the nucleus. The protein resides in the P-body. It carries out the reaction a 2'-deoxycytidine in single-stranded DNA + H2O + H(+) = a 2'-deoxyuridine in single-stranded DNA + NH4(+). Its function is as follows. DNA deaminase (cytidine deaminase) which acts as an inhibitor of retrovirus replication and retrotransposon mobility. After the penetration of retroviral nucleocapsids into target cells of infection and the initiation of reverse transcription, it can induce the conversion of cytosine to uracil in the minus-sense single-strand viral DNA, leading to G-to-A hypermutations in the subsequent plus-strand viral DNA. The resultant detrimental levels of mutations in the proviral genome, along with a deamination-independent mechanism that works prior to the proviral integration, together exert efficient antiretroviral effects in infected target cells. Selectively targets single-stranded DNA and does not deaminate double-stranded DNA or single- or double-stranded RNA. This Papio anubis (Olive baboon) protein is DNA dC-&gt;dU-editing enzyme APOBEC-3G (APOBEC3G).